The primary structure comprises 320 residues: Malate dehydrogenase (320 aa).

Residues 10 to 15 and D34 contribute to the NAD(+) site; that span reads GSGMIG. Substrate-binding residues include R83 and R89. Residues N96 and 119 to 121 each bind NAD(+); that span reads ITN. Residues N121 and R152 each coordinate substrate. The active-site Proton acceptor is H176.

This sequence belongs to the LDH/MDH superfamily. MDH type 3 family.

It carries out the reaction (S)-malate + NAD(+) = oxaloacetate + NADH + H(+). Catalyzes the reversible oxidation of malate to oxaloacetate. This Allorhizobium ampelinum (strain ATCC BAA-846 / DSM 112012 / S4) (Agrobacterium vitis (strain S4)) protein is Malate dehydrogenase.